The sequence spans 198 residues: Protoplast secreted protein 2 (198 aa).

Positions 1-21 are cleaved as a signal peptide; that stretch reads MPRVAIIIYTLYGHVAATAEA. A Flavodoxin-like domain is found at 22–191; the sequence is EKKGIEAAGG…QVHEIQGKTF (170 aa).

It belongs to the WrbA family.

The protein resides in the secreted. The sequence is that of Protoplast secreted protein 2 (PST2) from Saccharomyces cerevisiae (strain ATCC 204508 / S288c) (Baker's yeast).